An 802-amino-acid chain; its full sequence is Penicillin G acylase (802 aa).

The N-terminal stretch at 1–24 (MKTKWLISVIILFVFIFPQNLVFA) is a signal peptide. Glu177 is a binding site for Ca(2+). The propeptide at 235 to 265 (SAVIKASEKVGKERENFVQTSEELGLPLKIG) is spacer peptide. Catalysis depends on Ser266, which acts as the Nucleophile. Ca(2+) is bound at residue Asp341.

The protein belongs to the peptidase S45 family. As to quaternary structure, heterodimer of an alpha subunit and a beta subunit processed from the same precursor. The cofactor is Ca(2+).

It is found in the secreted. It carries out the reaction a penicillin + H2O = 6-aminopenicillanate + a carboxylate. This is Penicillin G acylase (pac) from Priestia megaterium (Bacillus megaterium).